A 70-amino-acid polypeptide reads, in one-letter code: Protein SlyX homolog (70 aa).

The protein belongs to the SlyX family.

In Nitrobacter winogradskyi (strain ATCC 25391 / DSM 10237 / CIP 104748 / NCIMB 11846 / Nb-255), this protein is Protein SlyX homolog.